The primary structure comprises 433 residues: Keratin, type I cytoskeletal 17 (433 aa).

Positions 1–24 (MTTTIRQFTSSSSIKGSSGLGGGS) are disordered. The interval 1–83 (MTTTIRQFTS…GGVDGLLAGG (83 aa)) is head. A phosphoserine mark is found at serine 12 and serine 13. Lysine 15 participates in a covalent cross-link: Glycyl lysine isopeptide (Lys-Gly) (interchain with G-Cter in SUMO1); alternate. Lysine 15 participates in a covalent cross-link: Glycyl lysine isopeptide (Lys-Gly) (interchain with G-Cter in SUMO2); alternate. Phosphoserine occurs at positions 25, 32, 34, and 39. Serine 44 is subject to Phosphoserine; by RPS6KA1. The segment at 84–120 (EKATMQNLNDRLASYLDKVRALEEANTELEVKIRDWY) is coil 1A. The IF rod domain maps to 84–395 (EKATMQNLND…RLLEGEDAHL (312 aa)). The residue at position 110 (threonine 110) is a Phosphothreonine. The tract at residues 121 to 138 (QKQAPGPARDYSAYYQTI) is linker 1. A coil 1B region spans residues 139–230 (EDLKNKILVA…NHEEEMNALR (92 aa)). The segment at 231-250 (GQVGGEINVEMDAAPGVDLS) is linker 12. Residues 251–392 (RILSEMRDQY…TYRRLLEGED (142 aa)) form a coil 2 region. Lysine 278 is covalently cross-linked (Glycyl lysine isopeptide (Lys-Gly) (interchain with G-Cter in SUMO2)). Threonine 279 is subject to Phosphothreonine. Position 323 is a phosphoserine (serine 323). Residues 393 to 433 (AHLTQYKPKEPVTTRQVRTIVEEVQDGKVISSREQVHQTTR) are tail. Residues lysine 399, lysine 401, and lysine 420 each participate in a glycyl lysine isopeptide (Lys-Gly) (interchain with G-Cter in SUMO1); alternate cross-link. Glycyl lysine isopeptide (Lys-Gly) (interchain with G-Cter in SUMO2); alternate cross-links involve residues lysine 399, lysine 401, and lysine 420.

It belongs to the intermediate filament family. Heterodimer of a type I and a type II keratin. KRT17 associates with KRT6 isomers (KRT6A or KRT6B). Interacts with TRADD and SFN. In terms of processing, phosphorylation at Ser-44 occurs in a growth- and stress-dependent fashion in skin keratinocytes, it has no effect on filament organization.

The protein resides in the cytoplasm. Functionally, type I keratin involved in the formation and maintenance of various skin appendages, specifically in determining shape and orientation of hair. Required for the correct growth of hair follicles, in particular for the persistence of the anagen (growth) state. Modulates the function of TNF-alpha in the specific context of hair cycling. Regulates protein synthesis and epithelial cell growth through binding to the adapter protein SFN and by stimulating Akt/mTOR pathway. Involved in tissue repair. May be a marker of basal cell differentiation in complex epithelia and therefore indicative of a certain type of epithelial 'stem cells'. Acts as a promoter of epithelial proliferation by acting a regulator of immune response in skin: promotes Th1/Th17-dominated immune environment contributing to the development of basaloid skin tumors. May act as an autoantigen in the immunopathogenesis of psoriasis, with certain peptide regions being a major target for autoreactive T-cells and hence causing their proliferation. The protein is Keratin, type I cytoskeletal 17 of Rattus norvegicus (Rat).